Reading from the N-terminus, the 88-residue chain is Small ribosomal subunit protein uS17 (88 aa).

The protein belongs to the universal ribosomal protein uS17 family. Part of the 30S ribosomal subunit.

In terms of biological role, one of the primary rRNA binding proteins, it binds specifically to the 5'-end of 16S ribosomal RNA. In Prochlorococcus marinus (strain MIT 9303), this protein is Small ribosomal subunit protein uS17.